A 300-amino-acid chain; its full sequence is GTP cyclohydrolase FolE2 (300 aa).

It belongs to the GTP cyclohydrolase IV family.

It catalyses the reaction GTP + H2O = 7,8-dihydroneopterin 3'-triphosphate + formate + H(+). It functions in the pathway cofactor biosynthesis; 7,8-dihydroneopterin triphosphate biosynthesis; 7,8-dihydroneopterin triphosphate from GTP: step 1/1. Its function is as follows. Converts GTP to 7,8-dihydroneopterin triphosphate. The chain is GTP cyclohydrolase FolE2 from Bacillus licheniformis (strain ATCC 14580 / DSM 13 / JCM 2505 / CCUG 7422 / NBRC 12200 / NCIMB 9375 / NCTC 10341 / NRRL NRS-1264 / Gibson 46).